A 171-amino-acid polypeptide reads, in one-letter code: Small ribosomal subunit protein uS13 (171 aa).

The disordered stretch occupies residues 128–171 (HERGQKVRGQRTKSTGRTEGTIGVNVEAIKEEQAEDDAADGGEE). The span at 160-171 (QAEDDAADGGEE) shows a compositional bias: acidic residues.

This sequence belongs to the universal ribosomal protein uS13 family. In terms of assembly, part of the 30S ribosomal subunit. Forms a loose heterodimer with protein S19. Forms two bridges to the 50S subunit in the 70S ribosome.

Functionally, located at the top of the head of the 30S subunit, it contacts several helices of the 16S rRNA. In the 70S ribosome it contacts the 23S rRNA (bridge B1a) and protein L5 of the 50S subunit (bridge B1b), connecting the 2 subunits; these bridges are implicated in subunit movement. The chain is Small ribosomal subunit protein uS13 from Halobacterium salinarum (strain ATCC 700922 / JCM 11081 / NRC-1) (Halobacterium halobium).